The sequence spans 261 residues: Large ribosomal subunit protein uL3 (261 aa).

A compositionally biased stretch (low complexity) spans 138 to 148 (SVSHRSHGSTG). 2 disordered regions span residues 138 to 163 (SVSHRSHGSTGQRQDPGRTFPGKKMA) and 214 to 261 (ADAP…GDQA). Position 151 is an N5-methylglutamine (Gln-151). Low complexity predominate over residues 227-261 (APTPVEAAADEAAPAEEPAVTEAPAAEATEAGDQA).

It belongs to the universal ribosomal protein uL3 family. In terms of assembly, part of the 50S ribosomal subunit. Forms a cluster with proteins L14 and L19. Post-translationally, methylated by PrmB.

In terms of biological role, one of the primary rRNA binding proteins, it binds directly near the 3'-end of the 23S rRNA, where it nucleates assembly of the 50S subunit. This chain is Large ribosomal subunit protein uL3, found in Phenylobacterium zucineum (strain HLK1).